A 407-amino-acid polypeptide reads, in one-letter code: Nicotinate phosphoribosyltransferase (407 aa).

The residue at position 228 (His228) is a Phosphohistidine; by autocatalysis.

Belongs to the NAPRTase family. Post-translationally, transiently phosphorylated on a His residue during the reaction cycle. Phosphorylation strongly increases the affinity for substrates and increases the rate of nicotinate D-ribonucleotide production. Dephosphorylation regenerates the low-affinity form of the enzyme, leading to product release.

The catalysed reaction is nicotinate + 5-phospho-alpha-D-ribose 1-diphosphate + ATP + H2O = nicotinate beta-D-ribonucleotide + ADP + phosphate + diphosphate. The protein operates within cofactor biosynthesis; NAD(+) biosynthesis; nicotinate D-ribonucleotide from nicotinate: step 1/1. Its activity is regulated as follows. 100-fold more active in the presence of saturating ATP. Catalyzes the synthesis of beta-nicotinate D-ribonucleotide from nicotinate and 5-phospho-D-ribose 1-phosphate at the expense of ATP. Functions in the deamidating salvage pathway for production of NAD from nicotinamide. Displays a strict preference for nicotinate over nicotinamide substrate. This chain is Nicotinate phosphoribosyltransferase, found in Acinetobacter baylyi (strain ATCC 33305 / BD413 / ADP1).